An 83-amino-acid polypeptide reads, in one-letter code: uncharacterized protein (83 aa).

The next 3 membrane-spanning stretches (helical) occupy residues 5 to 22, 32 to 49, and 56 to 78; these read VLLS…VYSI, IIKI…FSPA, and IGTI…IFIA.

Its subcellular location is the cell membrane. This is an uncharacterized protein from Rickettsia prowazekii (strain Madrid E).